Consider the following 156-residue polypeptide: Small ribosomal subunit protein uS7cz/uS7cy (156 aa).

Belongs to the universal ribosomal protein uS7 family. In terms of assembly, part of the 30S ribosomal subunit.

The protein resides in the plastid. It localises to the chloroplast. Its function is as follows. One of the primary rRNA binding proteins, it binds directly to 16S rRNA where it nucleates assembly of the head domain of the 30S subunit. This chain is Small ribosomal subunit protein uS7cz/uS7cy (rps7-A), found in Saccharum hybrid (Sugarcane).